The sequence spans 281 residues: RNA polymerase sigma factor RpoH (281 aa).

The segment at 52–121 (LILSHLRFVI…IHEYVLRNWR (70 aa)) is sigma-70 factor domain-2. An Interaction with polymerase core subunit RpoC motif is present at residues 76–79 (DLIQ). The tract at residues 226–277 (ALQSLDARSQDIIKARWLDDNKATLHDLAAKYNVSAERIRQLETNALKKLKS) is sigma-70 factor domain-4. The H-T-H motif DNA-binding region spans 250-269 (LHDLAAKYNVSAERIRQLET).

It belongs to the sigma-70 factor family. RpoH subfamily. Interacts with the RNA polymerase core enzyme.

The protein localises to the cytoplasm. Functionally, sigma factors are initiation factors that promote the attachment of RNA polymerase to specific initiation sites and are then released. This sigma factor is involved in regulation of expression of heat shock genes. This is RNA polymerase sigma factor RpoH from Haemophilus influenzae (strain ATCC 51907 / DSM 11121 / KW20 / Rd).